A 199-amino-acid chain; its full sequence is Small ribosomal subunit protein eS1 (199 aa).

This sequence belongs to the eukaryotic ribosomal protein eS1 family.

In Pyrococcus abyssi (strain GE5 / Orsay), this protein is Small ribosomal subunit protein eS1.